Reading from the N-terminus, the 242-residue chain is 3-oxoacyl-[acyl-carrier-protein] reductase FabG (242 aa).

NADP(+) contacts are provided by residues 10–13 (GSTR), threonine 35, 57–58 (NV), and asparagine 84. Serine 136 serves as a coordination point for substrate. Tyrosine 149 (proton acceptor) is an active-site residue. NADP(+)-binding positions include 149 to 153 (YCAAK) and isoleucine 182.

Belongs to the short-chain dehydrogenases/reductases (SDR) family. As to quaternary structure, homotetramer.

It carries out the reaction a (3R)-hydroxyacyl-[ACP] + NADP(+) = a 3-oxoacyl-[ACP] + NADPH + H(+). It participates in lipid metabolism; fatty acid biosynthesis. Catalyzes the NADPH-dependent reduction of beta-ketoacyl-ACP substrates to beta-hydroxyacyl-ACP products, the first reductive step in the elongation cycle of fatty acid biosynthesis. The chain is 3-oxoacyl-[acyl-carrier-protein] reductase FabG (fabG) from Haemophilus influenzae (strain ATCC 51907 / DSM 11121 / KW20 / Rd).